The following is a 337-amino-acid chain: GTPase Obg (337 aa).

The Obg domain maps to Met-1–Leu-159. The OBG-type G domain occupies Ser-160–Ile-329. GTP-binding positions include Gly-166–Ser-173, Phe-191–Arg-195, Asp-212–Gly-215, Asn-279–Asp-282, and Asp-310–Asp-312. Residues Ser-173 and Thr-193 each contribute to the Mg(2+) site.

This sequence belongs to the TRAFAC class OBG-HflX-like GTPase superfamily. OBG GTPase family. In terms of assembly, monomer. The cofactor is Mg(2+).

It localises to the cytoplasm. An essential GTPase which binds GTP, GDP and possibly (p)ppGpp with moderate affinity, with high nucleotide exchange rates and a fairly low GTP hydrolysis rate. Plays a role in control of the cell cycle, stress response, ribosome biogenesis and in those bacteria that undergo differentiation, in morphogenesis control. The sequence is that of GTPase Obg from Wolbachia pipientis subsp. Culex pipiens (strain wPip).